We begin with the raw amino-acid sequence, 494 residues long: NAD(P)H-quinone oxidoreductase subunit 2 B, chloroplastic (494 aa).

Transmembrane regions (helical) follow at residues 6–26 (LLLF…GLIL), 39–59 (TPWF…VLLF), 81–101 (IFRF…VEYI), 106–126 (MAIT…MVLC), 131–151 (LVTI…LSGY), 166–186 (LLMG…LYGL), 211–231 (ILIA…LVPF), 277–297 (WHLL…LIAI), 305–325 (MLAY…IAGD), 336–356 (YMLF…LFGL), 377–397 (AFSL…AGFF), 413–433 (LLVS…LKII), and 468–488 (MIVC…IIAI).

Belongs to the complex I subunit 2 family. In terms of assembly, NDH is composed of at least 16 different subunits, 5 of which are encoded in the nucleus.

It localises to the plastid. The protein localises to the chloroplast thylakoid membrane. The enzyme catalyses a plastoquinone + NADH + (n+1) H(+)(in) = a plastoquinol + NAD(+) + n H(+)(out). The catalysed reaction is a plastoquinone + NADPH + (n+1) H(+)(in) = a plastoquinol + NADP(+) + n H(+)(out). Functionally, NDH shuttles electrons from NAD(P)H:plastoquinone, via FMN and iron-sulfur (Fe-S) centers, to quinones in the photosynthetic chain and possibly in a chloroplast respiratory chain. The immediate electron acceptor for the enzyme in this species is believed to be plastoquinone. Couples the redox reaction to proton translocation, and thus conserves the redox energy in a proton gradient. The protein is NAD(P)H-quinone oxidoreductase subunit 2 B, chloroplastic of Cycas taitungensis (Prince sago).